Consider the following 316-residue polypeptide: Ribosomal RNA small subunit methyltransferase H (316 aa).

S-adenosyl-L-methionine-binding positions include 35-37 (AGH), aspartate 55, phenylalanine 84, aspartate 105, and glutamine 112.

It belongs to the methyltransferase superfamily. RsmH family.

It is found in the cytoplasm. It carries out the reaction cytidine(1402) in 16S rRNA + S-adenosyl-L-methionine = N(4)-methylcytidine(1402) in 16S rRNA + S-adenosyl-L-homocysteine + H(+). Functionally, specifically methylates the N4 position of cytidine in position 1402 (C1402) of 16S rRNA. This chain is Ribosomal RNA small subunit methyltransferase H, found in Streptococcus gordonii (strain Challis / ATCC 35105 / BCRC 15272 / CH1 / DL1 / V288).